We begin with the raw amino-acid sequence, 154 residues long: Putative hydrogenase maturation protease MJ0253 (154 aa).

It belongs to the peptidase A31 family.

This is Putative hydrogenase maturation protease MJ0253 from Methanocaldococcus jannaschii (strain ATCC 43067 / DSM 2661 / JAL-1 / JCM 10045 / NBRC 100440) (Methanococcus jannaschii).